Here is a 451-residue protein sequence, read N- to C-terminus: UDP-N-acetylmuramoylalanine--D-glutamate ligase (451 aa).

ATP is bound at residue 120–126 (GSNGKTT).

The protein belongs to the MurCDEF family.

Its subcellular location is the cytoplasm. It carries out the reaction UDP-N-acetyl-alpha-D-muramoyl-L-alanine + D-glutamate + ATP = UDP-N-acetyl-alpha-D-muramoyl-L-alanyl-D-glutamate + ADP + phosphate + H(+). It functions in the pathway cell wall biogenesis; peptidoglycan biosynthesis. In terms of biological role, cell wall formation. Catalyzes the addition of glutamate to the nucleotide precursor UDP-N-acetylmuramoyl-L-alanine (UMA). The chain is UDP-N-acetylmuramoylalanine--D-glutamate ligase (murD) from Bacillus subtilis (strain 168).